A 95-amino-acid polypeptide reads, in one-letter code: Acylphosphatase (95 aa).

One can recognise an Acylphosphatase-like domain in the interval Arg6–Tyr94. Catalysis depends on residues Arg21 and Asn39.

Belongs to the acylphosphatase family.

The enzyme catalyses an acyl phosphate + H2O = a carboxylate + phosphate + H(+). This is Acylphosphatase (acyP) from Caldivirga maquilingensis (strain ATCC 700844 / DSM 13496 / JCM 10307 / IC-167).